The following is a 684-amino-acid chain: Macrolide export ATP-binding/permease protein MacB (684 aa).

The 242-residue stretch at 2–243 (IQLYGLRKDY…RSRLANSRAE (242 aa)) folds into the ABC transporter domain. ATP is bound at residue 38-45 (GSSGSGKT). A run of 5 helical transmembrane segments spans residues 248–268 (PASAWSLPATWNAIVVAVLAL), 275–295 (TVLTMLGVIIGVASVISTMEL), 563–583 (LVIAGVSLMVGGVGIMNIMLV), 615–635 (VLCVVGGFIGIFAGHMWSVLV), and 644–664 (AMSIWAPIVAVTVAATVGIVF).

It belongs to the ABC transporter superfamily. Macrolide exporter (TC 3.A.1.122) family. In terms of assembly, homodimer.

It is found in the cell inner membrane. Non-canonical ABC transporter that contains transmembrane domains (TMD), which form a pore in the inner membrane, and an ATP-binding domain (NBD), which is responsible for energy generation. Confers resistance against macrolides. This chain is Macrolide export ATP-binding/permease protein MacB, found in Rhodopirellula baltica (strain DSM 10527 / NCIMB 13988 / SH1).